The sequence spans 474 residues: DNA damage checkpoint control protein MEC3 (474 aa).

Ser452 carries the phosphoserine modification.

It belongs to the MEC3 family. In terms of assembly, component of the checkpoint clamp complex composed of DDC1, MEC3 and RAD17. The interaction with MEC3 is performed in a RAD17-dependent manner. The checkpoint clamp complex loads onto DNA. Interacts with the DNA polymerase zeta subunit REV7. Also forms a heterotrimer with 2 RAD17 subunits. Interacts with SET1.

Its subcellular location is the nucleus. Component of the checkpoint clamp complex involved in the surveillance mechanism that allows the DNA repair pathways to act to restore the integrity of the DNA prior to DNA synthesis or separation of the replicated chromosomes. Associates with sites of DNA damage and modulates the MEC1 signaling pathway and the activation of RAD53 in response to DNA damage at phase G1. The complex also physically regulates DNA polymerase zeta-dependent mutagenesis by controlling the access of polymerase zeta to damaged DNA. In Saccharomyces cerevisiae (strain ATCC 204508 / S288c) (Baker's yeast), this protein is DNA damage checkpoint control protein MEC3 (MEC3).